The chain runs to 454 residues: Probable 1,4-beta-D-glucan cellobiohydrolase C (454 aa).

Residues 1–19 (MKHLASSIALTLLLPAVQA) form the signal peptide. The 36-residue stretch at 20–55 (QQTVWGQCGGQGWSGPTSCVAGAACSTLNPYYAQCI) folds into the CBM1 domain. Cystine bridges form between cysteine 27-cysteine 44 and cysteine 38-cysteine 54. Thr-rich linker regions lie at residues 59–94 (TATSTTLTTTTAATTTSQTTTKPTTTGPTTSAPTVT) and 95–454 (ASGN…NPSF). Residues 68 to 95 (TTAATTTSQTTTKPTTTGPTTSAPTVTA) form a disordered region. The active site involves aspartate 184. Disulfide bonds link cysteine 185–cysteine 244 and cysteine 376–cysteine 423. The active-site Proton donor is aspartate 230. The Nucleophile role is filled by aspartate 409. Residue asparagine 413 is glycosylated (N-linked (GlcNAc...) asparagine).

Belongs to the glycosyl hydrolase 6 (cellulase B) family.

Its subcellular location is the secreted. The catalysed reaction is Hydrolysis of (1-&gt;4)-beta-D-glucosidic linkages in cellulose and cellotetraose, releasing cellobiose from the non-reducing ends of the chains.. In terms of biological role, the biological conversion of cellulose to glucose generally requires three types of hydrolytic enzymes: (1) Endoglucanases which cut internal beta-1,4-glucosidic bonds; (2) Exocellobiohydrolases that cut the disaccharide cellobiose from the non-reducing end of the cellulose polymer chain; (3) Beta-1,4-glucosidases which hydrolyze the cellobiose and other short cello-oligosaccharides to glucose. The sequence is that of Probable 1,4-beta-D-glucan cellobiohydrolase C (cbhC) from Aspergillus fumigatus (strain CBS 144.89 / FGSC A1163 / CEA10) (Neosartorya fumigata).